The sequence spans 382 residues: GDP-mannose-dependent alpha-(1-6)-phosphatidylinositol monomannoside mannosyltransferase (382 aa).

GDP-alpha-D-mannose-binding residues include Arg200, Lys205, Ile257, and Glu294.

Belongs to the glycosyltransferase group 1 family. Glycosyltransferase 4 subfamily.

It catalyses the reaction a 1,2-diacyl-sn-glycero-3-phospho-[alpha-D-mannopyranosyl-(1&lt;-&gt;6)-D-myo-inositol] + GDP-alpha-D-mannose = a 2,6-O-bis(alpha-D-mannopyranosyl)-1-phosphatidyl-1D-myo-inositol + GDP + H(+). It carries out the reaction a 1,2-diacyl-sn-glycero-3-phospho-[alpha-D-6-acyl-mannopyranosyl-(1&lt;-&gt;6)-D-myo-inositol] + GDP-alpha-D-mannose = a 2-O-(alpha-D-mannosyl)-6-O-(6-O-acyl-alpha-D-mannosyl)-1-phosphatidyl-1D-myo-inositol + GDP + H(+). Its pathway is phospholipid metabolism; phosphatidylinositol metabolism. Functionally, involved in the biosynthesis of phosphatidyl-myo-inositol mannosides (PIM) which are early precursors in the biosynthesis of lipomannans (LM) and lipoarabinomannans (LAM). Catalyzes the addition of a mannosyl residue from GDP-D-mannose (GDP-Man) to the position 6 of a phosphatidyl-myo-inositol bearing an alpha-1,2-linked mannose residue (PIM1) to generate phosphatidyl-myo-inositol bearing alpha-1,2- and alpha-1,6-linked mannose residues (Ac1PIM2). PimB also catalyzes the addition of a mannosyl residue from GDP-Man to the position 6 of phosphatidyl-myo-inositol bearing an acylated alpha-1,2-linked mannose residue (Ac1PIM1) to generate monoacylated phosphatidyl-myo-inositol bearing alpha-1,2- and alpha-1,6-linked mannose residues (Ac1PIM2). The addition of the second mannosyl residue by PimB preferentially occurs before the acylation of the mannosyl residue transferred by PimA. Also able to transfer a mannosyl residue from GDP-Man to the position 6 of a phosphatidyl-myo-inositol (PI), but this reaction is very slow. In Mycolicibacterium smegmatis (strain ATCC 700084 / mc(2)155) (Mycobacterium smegmatis), this protein is GDP-mannose-dependent alpha-(1-6)-phosphatidylinositol monomannoside mannosyltransferase.